A 156-amino-acid polypeptide reads, in one-letter code: ATP synthase subunit b (156 aa).

Residues 7-27 (LFAQIIVFFGLVWFTMKFVWP) form a helical membrane-spanning segment.

This sequence belongs to the ATPase B chain family. F-type ATPases have 2 components, F(1) - the catalytic core - and F(0) - the membrane proton channel. F(1) has five subunits: alpha(3), beta(3), gamma(1), delta(1), epsilon(1). F(0) has three main subunits: a(1), b(2) and c(10-14). The alpha and beta chains form an alternating ring which encloses part of the gamma chain. F(1) is attached to F(0) by a central stalk formed by the gamma and epsilon chains, while a peripheral stalk is formed by the delta and b chains.

The protein resides in the cell inner membrane. Functionally, f(1)F(0) ATP synthase produces ATP from ADP in the presence of a proton or sodium gradient. F-type ATPases consist of two structural domains, F(1) containing the extramembraneous catalytic core and F(0) containing the membrane proton channel, linked together by a central stalk and a peripheral stalk. During catalysis, ATP synthesis in the catalytic domain of F(1) is coupled via a rotary mechanism of the central stalk subunits to proton translocation. In terms of biological role, component of the F(0) channel, it forms part of the peripheral stalk, linking F(1) to F(0). The sequence is that of ATP synthase subunit b from Neisseria meningitidis serogroup C (strain 053442).